A 572-amino-acid polypeptide reads, in one-letter code: MALTISRAQYVATYGPTVGDKVRLGDTNLWATIEQDLLTKGDECKFGGGKSVRDGMAQSGTATRDNPNVLDFVITNVMIIDAKLGIIKADIGIRDGRIVGIGQAGNPDTMDNVTPNMIIGASTEVHNGAHLIATAGGIDTHIHFICPQQAQHAIESGVTTLIGGGTGPADGTHATTCTPGAWYMERMFQAAEALPVNVGFFGKGNCSTLDPLREQIEAGALGLKIHEDWGATPAVIDSALKVADEMDIQVAIHTDTLNESGFLEDTMKAIDGRVIHTFHTEGAGGGHAPDIIKAAMYSNVLPASTNPTRPFTKNTIDEHLDMLMVCHHLDKRVPEDVAFADSRIRPETIAAEDILHDMGVFSIMSSDSQAMGRIGEVVIRTWQTADKMKMQRGELGNEGNDNFRIKRYIAKYTINPAIAHGIAEHIGSLEVGKIADIVLWKPMFFGVKPEVVIKKGFISYAKMGDPNASIPTPQPVFYRPMYGAQGLATAQTAVFFVSQAAEKADIRAKFGLHKETIAVKGCRNVGKKDLVHNDVTPNITVDAERYEVRVDGELITCEPVDSVPLGQRYFLF.

The 437-residue stretch at 136–572 (GGIDTHIHFI…VPLGQRYFLF (437 aa)) folds into the Urease domain. Ni(2+) is bound by residues H141, H143, and K224. The residue at position 224 (K224) is an N6-carboxylysine. Substrate is bound at residue H226. Ni(2+) contacts are provided by H253 and H279. Residue H327 is the Proton donor of the active site. Residue D367 participates in Ni(2+) binding.

The protein belongs to the metallo-dependent hydrolases superfamily. Urease alpha subunit family. As to quaternary structure, heterotrimer of UreA (gamma), UreB (beta) and UreC (alpha) subunits. Three heterotrimers associate to form the active enzyme. It depends on Ni cation as a cofactor. Carboxylation allows a single lysine to coordinate two nickel ions.

The protein resides in the cytoplasm. It catalyses the reaction urea + 2 H2O + H(+) = hydrogencarbonate + 2 NH4(+). Its pathway is nitrogen metabolism; urea degradation; CO(2) and NH(3) from urea (urease route): step 1/1. This chain is Urease subunit alpha, found in Haemophilus influenzae (strain ATCC 51907 / DSM 11121 / KW20 / Rd).